Consider the following 960-residue polypeptide: Phosphoenolpyruvate carboxylase 2 (960 aa).

Active-site residues include H167 and K595.

The protein belongs to the PEPCase type 1 family. In terms of assembly, homotetramer. Mg(2+) serves as cofactor.

The protein localises to the cytoplasm. It carries out the reaction oxaloacetate + phosphate = phosphoenolpyruvate + hydrogencarbonate. It participates in photosynthesis; C3 acid pathway. Functionally, through the carboxylation of phosphoenolpyruvate (PEP) it forms oxaloacetate, a four-carbon dicarboxylic acid source for the tricarboxylic acid cycle. The protein is Phosphoenolpyruvate carboxylase 2 of Sorghum bicolor (Sorghum).